We begin with the raw amino-acid sequence, 784 residues long: Toll-like receptor 2 (784 aa).

The signal sequence occupies residues 1 to 24 (MLRALWLFWILVAITVLFSKRCSA). At 25 to 587 (QESLSCDASG…ARPSVLECHQ (563 aa)) the chain is on the extracellular side. Cys30 and Cys36 are oxidised to a cystine. LRR repeat units lie at residues 54-77 (MKSL…ACAN), 78-101 (LQVL…SLGS), 102-125 (LEHL…PLSS), 126-150 (LKYL…NLTN), 151-175 (LQTL…GLTS), 176-199 (LNEL…SIRD), 200-223 (IHHL…ILSS), 224-250 (VRYL…VSSP), 251-278 (MKKL…YILE), 279-308 (LSEV…ELGK), 309-337 (VETV…LLEK), 338-361 (VKRI…HLKS), 362-388 (LEFL…AWPS), 389-414 (LQTL…TLKN), 415-437 (LTSL…WPEK), 438-457 (MRFL…CIPQ), 458-478 (TLEV…FLPR), 479-500 (LQEL…LFPV), and 501-524 (LLVM…SFPK). An N-linked (GlcNAc...) asparagine glycan is attached at Asn147. Residues Cys353 and Cys382 are joined by a disulfide bond. An N-linked (GlcNAc...) asparagine glycan is attached at Asn414. Cys432 and Cys454 are joined by a disulfide. Asn442 carries N-linked (GlcNAc...) asparagine glycosylation. In terms of domain architecture, LRRCT spans 525 to 576 (LETLEAGDNHFVCSCELLSFTMETPALAQILVDWPDSYLCDSPPRLHGHRLQ). Residues 588-608 (AALVSGVCCALLLLILLVGAL) form a helical membrane-spanning segment. Topologically, residues 609-784 (CHHFHGLWYL…WVNLRTAIKS (176 aa)) are cytoplasmic. Positions 639-782 (VCYDAFVSYS…VFWVNLRTAI (144 aa)) constitute a TIR domain. A Glycyl lysine isopeptide (Lys-Gly) (interchain with G-Cter in ubiquitin) cross-link involves residue Lys754. Residues 761–778 (YLEWPLDEGQQEVFWVNL) carry the ATG16L1-binding motif motif.

Belongs to the Toll-like receptor family. In terms of assembly, interacts with LY96, TLR1 and TLR6 (via extracellular domain). TLR2 seems to exist in heterodimers with either TLR1 or TLR6 before stimulation by the ligand. The heterodimers form bigger oligomers in response to their corresponding ligands as well as further heterotypic associations with other receptors such as CD14 and/or CD36. Binds MYD88 (via TIR domain). Interacts with TICAM1. Interacts with CNPY3. Interacts with ATG16L1. Interacts with non-modified M.tuberculosis protein MPT83. Interacts with PPP1R11. Interacts with TIRAP. As to quaternary structure, (Microbial infection) Interacts with Staphylococcus aureus protein SSL3; this interaction inhibits TLR2-mediated cytokine production. (Microbial infection) Interacts with Toxoplasma gondii micronemal protein 1 (MIC1); the interaction promotes activation of bone marrow-derived dendritic cells and macrophages. Interacts with Toxoplasma gondii micronemal protein 4 (MIC4); the interaction promotes activation of bone marrow-derived dendritic cells and macrophages. Post-translationally, ubiquitinated at Lys-754 by PPP1R11, leading to its degradation. Deubiquitinated by USP2. In terms of processing, glycosylation of Asn-442 is critical for secretion of the N-terminal ectodomain of TLR2. Detected in a macrophage cell line, smooth muscle, lung, spleen, thymus, brain and adipose tissue. Cell surface expression detected in lung alveolar macrophages, dendritic macrophages and at lower levels in lung macrophages (at protein level).

The protein localises to the cell membrane. The protein resides in the cytoplasmic vesicle. It localises to the phagosome membrane. Its subcellular location is the membrane raft. Cooperates with LY96 to mediate the innate immune response to bacterial lipoproteins and other microbial cell wall components. Cooperates with TLR1 or TLR6 to mediate the innate immune response to bacterial lipoproteins or lipopeptides. Acts via MYD88 and TRAF6, leading to NF-kappa-B activation, cytokine secretion and the inflammatory response. May also promote apoptosis in response to lipoproteins. Forms activation clusters composed of several receptors depending on the ligand, these clusters trigger signaling from the cell surface and subsequently are targeted to the Golgi in a lipid-raft dependent pathway. Forms the cluster TLR2:TLR6:CD14:CD36 in response to diacylated lipopeptides and TLR2:TLR1:CD14 in response to triacylated lipopeptides. Recognizes M.tuberculosis major T-antigen EsxA (ESAT-6) which inhibits downstream MYD88-dependent signaling. Acts as the major receptor for M.tuberculosis lipoproteins LprA, LprG, LpqH and PhoS1 (pstS1), in conjunction with TLR1 and for some but not all lipoproteins CD14 and/or CD36. The lipoproteins act as agonists to modulate antigen presenting cell functions in response to the pathogen. Recombinant MPT83 from M.tuberculosis stimulates secretion of cytokines (TNF-alpha, IL-6 and IL-12p40) by mouse macrophage cell lines in a TLR2-dependent fashion, which leads to increased host innate immunity responses against the bacterium. Lung macrophages which express low levels of TLR2 respond poorly to stimulation by M.tuberculosis LpqH. Required for normal uptake of M.tuberculosis, a process that is inhibited by M.tuberculosis LppM. Interacts with TICAM2. In terms of biological role, (Microbial infection) Mediates activation of bone marrow-derived dendritic cells and macrophages, and production of pro-inflammatory cytokines, such as IL12 (IL12B/IL12A), triggered by Toxoplasma gondii micronemal protein 4 (MIC4) and micronemal protein 1 (MIC1). This is Toll-like receptor 2 (Tlr2) from Mus musculus (Mouse).